The chain runs to 814 residues: Echinoderm microtubule-associated protein-like 1 (814 aa).

Residues 31–72 adopt a coiled-coil conformation; that stretch reads SMEVSDRIASLEQRVQMQEDDIQLLKSALADVVRRLNITEEQ. Residues 77–180 form a disordered region; that stretch reads NRKGPTKARP…ESKPKEPAFS (104 aa). The segment covering 92–101 has biased composition (polar residues); the sequence is PLRTTVNNGT. A compositionally biased stretch (low complexity) spans 103-115; the sequence is LPKKPSASLPAPS. Positions 127–137 are enriched in polar residues; that stretch reads KSINRTSSSER. Positions 142 to 152 are enriched in basic and acidic residues; the sequence is GRRESSGDSKG. A compositionally biased stretch (low complexity) spans 155-167; sequence NRTGSTSSSSSGK. The tract at residues 175-814 is tandem atypical propeller in EMLs; sequence KEPAFSPEEG…DTSIMQWRVI (640 aa). 12 WD repeats span residues 260–309, 314–357, 362–399, 408–445, 449–488, 492–529, 534–571, 577–612, 616–654, 663–700, 708–767, and 774–813; these read EQLQ…IWDS, TLHV…VWDW, RLADVKCSNEAVFAADFHPTDTNIIVTCGKSHLYFWTL, QGLFEKQEKPKFVLCVTFSENGDTITGDSSGNILVWGK, RISYAVQGAHEGGIFALCMLRDGTLVSGGGKDRRLISWNG, KLHKAEIPEQFGPIRTVAEGKGNVILIGTTRNFVLQGT, FTPITQGHTDELWGLAIHASKPQFLTCGHDKHATLWDA, VWDKIIEDPAQSSGFHPSGSVVAVGTLTGRWFVFDT, DLVTVHTDGNEQLSVMRYSPDGNFLAIGSHDNCIYIYGV, RVGKCSGHSSFITHLDWSVNSQFLVSNSGDYEILYWVP, SVET…LFSY, and APSHIYSGHSSHVTNVDFLCEDSHLISTGGKDTSIMQWRV.

The protein belongs to the WD repeat EMAP family. As to quaternary structure, homotrimer; self-association is mediated by the N-terminal coiled coil. Does not interact with EML3. Binds unpolymerized tubulins via its WD repeat region. Binds repolymerizing microtubules. Interacts with TASOR. As to expression, detected in adult brain cortex, hippocampus and thalamus. Expressed in the stomach, lungs and in Sertoli cells of the testis.

It localises to the cytoplasm. The protein resides in the perinuclear region. It is found in the cytoskeleton. Modulates the assembly and organization of the microtubule cytoskeleton, and probably plays a role in regulating the orientation of the mitotic spindle and the orientation of the plane of cell division. Required for normal proliferation of neuronal progenitor cells in the developing brain and for normal brain development. Does not affect neuron migration per se. This is Echinoderm microtubule-associated protein-like 1 (Eml1) from Mus musculus (Mouse).